The primary structure comprises 108 residues: Protein YcgL (108 aa).

A YcgL domain is found at 12–96; it reads MFCVIYRSSK…SPEDLLKQHL (85 aa).

This Shigella dysenteriae serotype 1 (strain Sd197) protein is Protein YcgL.